A 407-amino-acid polypeptide reads, in one-letter code: Phosphopentomutase (407 aa).

Residues Asp-10, Asp-306, His-311, Asp-347, His-348, and His-359 each coordinate Mn(2+).

It belongs to the phosphopentomutase family. Requires Mn(2+) as cofactor.

It is found in the cytoplasm. It carries out the reaction 2-deoxy-alpha-D-ribose 1-phosphate = 2-deoxy-D-ribose 5-phosphate. The catalysed reaction is alpha-D-ribose 1-phosphate = D-ribose 5-phosphate. It participates in carbohydrate degradation; 2-deoxy-D-ribose 1-phosphate degradation; D-glyceraldehyde 3-phosphate and acetaldehyde from 2-deoxy-alpha-D-ribose 1-phosphate: step 1/2. In terms of biological role, isomerase that catalyzes the conversion of deoxy-ribose 1-phosphate (dRib-1-P) and ribose 1-phosphate (Rib-1-P) to deoxy-ribose 5-phosphate (dRib-5-P) and ribose 5-phosphate (Rib-5-P), respectively. This Salmonella dublin (strain CT_02021853) protein is Phosphopentomutase.